The primary structure comprises 276 residues: 4-deoxy-L-threo-5-hexosulose-uronate ketol-isomerase (276 aa).

Positions 194, 196, 201, and 243 each coordinate Zn(2+).

Belongs to the KduI family. The cofactor is Zn(2+).

It catalyses the reaction 5-dehydro-4-deoxy-D-glucuronate = 3-deoxy-D-glycero-2,5-hexodiulosonate. The protein operates within glycan metabolism; pectin degradation; 2-dehydro-3-deoxy-D-gluconate from pectin: step 4/5. In terms of biological role, catalyzes the isomerization of 5-dehydro-4-deoxy-D-glucuronate to 3-deoxy-D-glycero-2,5-hexodiulosonate. In Shouchella clausii (strain KSM-K16) (Alkalihalobacillus clausii), this protein is 4-deoxy-L-threo-5-hexosulose-uronate ketol-isomerase.